Here is a 450-residue protein sequence, read N- to C-terminus: Probable glycine dehydrogenase (decarboxylating) subunit 1 (450 aa).

This sequence belongs to the GcvP family. N-terminal subunit subfamily. In terms of assembly, the glycine cleavage system is composed of four proteins: P, T, L and H. In this organism, the P 'protein' is a heterodimer of two subunits.

It catalyses the reaction N(6)-[(R)-lipoyl]-L-lysyl-[glycine-cleavage complex H protein] + glycine + H(+) = N(6)-[(R)-S(8)-aminomethyldihydrolipoyl]-L-lysyl-[glycine-cleavage complex H protein] + CO2. Functionally, the glycine cleavage system catalyzes the degradation of glycine. The P protein binds the alpha-amino group of glycine through its pyridoxal phosphate cofactor; CO(2) is released and the remaining methylamine moiety is then transferred to the lipoamide cofactor of the H protein. This Desulfotalea psychrophila (strain LSv54 / DSM 12343) protein is Probable glycine dehydrogenase (decarboxylating) subunit 1.